Consider the following 376-residue polypeptide: Acetylornithine aminotransferase (376 aa).

Pyridoxal 5'-phosphate-binding positions include 96–97 (GT) and Phe-128. Arg-131 serves as a coordination point for N(2)-acetyl-L-ornithine. A pyridoxal 5'-phosphate-binding site is contributed by 213-216 (DEVQ). Lys-242 carries the post-translational modification N6-(pyridoxal phosphate)lysine. N(2)-acetyl-L-ornithine is bound at residue Ser-270. Position 271 (Thr-271) interacts with pyridoxal 5'-phosphate.

Belongs to the class-III pyridoxal-phosphate-dependent aminotransferase family. ArgD subfamily. Homodimer. Requires pyridoxal 5'-phosphate as cofactor.

Its subcellular location is the cytoplasm. It carries out the reaction N(2)-acetyl-L-ornithine + 2-oxoglutarate = N-acetyl-L-glutamate 5-semialdehyde + L-glutamate. The protein operates within amino-acid biosynthesis; L-arginine biosynthesis; N(2)-acetyl-L-ornithine from L-glutamate: step 4/4. This Aquifex aeolicus (strain VF5) protein is Acetylornithine aminotransferase.